The chain runs to 319 residues: Thioredoxin reductase (319 aa).

FAD is bound by residues 11 to 14 (SGPA), 40 to 41 (IA), Gln45, Asn54, Val87, Cys145, Asp288, and 295 to 297 (RQA). Cys142 and Cys145 form a disulfide bridge.

This sequence belongs to the class-II pyridine nucleotide-disulfide oxidoreductase family. Homodimer. The cofactor is FAD.

The protein resides in the cytoplasm. It carries out the reaction [thioredoxin]-dithiol + NADP(+) = [thioredoxin]-disulfide + NADPH + H(+). The protein is Thioredoxin reductase (TRR1) of Yarrowia lipolytica (strain CLIB 122 / E 150) (Yeast).